The chain runs to 291 residues: 33 kDa chaperonin (291 aa).

2 cysteine pairs are disulfide-bonded: C235/C237 and C268/C271.

Belongs to the HSP33 family. Under oxidizing conditions two disulfide bonds are formed involving the reactive cysteines. Under reducing conditions zinc is bound to the reactive cysteines and the protein is inactive.

It localises to the cytoplasm. In terms of biological role, redox regulated molecular chaperone. Protects both thermally unfolding and oxidatively damaged proteins from irreversible aggregation. Plays an important role in the bacterial defense system toward oxidative stress. This Streptococcus agalactiae serotype III (strain NEM316) protein is 33 kDa chaperonin.